Reading from the N-terminus, the 127-residue chain is Large ribosomal subunit protein bL12 (127 aa).

It belongs to the bacterial ribosomal protein bL12 family. As to quaternary structure, homodimer. Part of the ribosomal stalk of the 50S ribosomal subunit. Forms a multimeric L10(L12)X complex, where L10 forms an elongated spine to which 2 to 4 L12 dimers bind in a sequential fashion. Binds GTP-bound translation factors.

Forms part of the ribosomal stalk which helps the ribosome interact with GTP-bound translation factors. Is thus essential for accurate translation. This is Large ribosomal subunit protein bL12 from Syntrophotalea carbinolica (strain DSM 2380 / NBRC 103641 / GraBd1) (Pelobacter carbinolicus).